The following is a 341-amino-acid chain: Phosphatidylserine decarboxylase proenzyme (341 aa).

Active-site charge relay system; for autoendoproteolytic cleavage activity residues include D90, H147, and S254. Residue S254 is the Schiff-base intermediate with substrate; via pyruvic acid; for decarboxylase activity of the active site. S254 is modified (pyruvic acid (Ser); by autocatalysis). The tract at residues R287 to P341 is disordered.

The protein belongs to the phosphatidylserine decarboxylase family. PSD-B subfamily. Prokaryotic type I sub-subfamily. Heterodimer of a large membrane-associated beta subunit and a small pyruvoyl-containing alpha subunit. Requires pyruvate as cofactor. Post-translationally, is synthesized initially as an inactive proenzyme. Formation of the active enzyme involves a self-maturation process in which the active site pyruvoyl group is generated from an internal serine residue via an autocatalytic post-translational modification. Two non-identical subunits are generated from the proenzyme in this reaction, and the pyruvate is formed at the N-terminus of the alpha chain, which is derived from the carboxyl end of the proenzyme. The autoendoproteolytic cleavage occurs by a canonical serine protease mechanism, in which the side chain hydroxyl group of the serine supplies its oxygen atom to form the C-terminus of the beta chain, while the remainder of the serine residue undergoes an oxidative deamination to produce ammonia and the pyruvoyl prosthetic group on the alpha chain. During this reaction, the Ser that is part of the protease active site of the proenzyme becomes the pyruvoyl prosthetic group, which constitutes an essential element of the active site of the mature decarboxylase.

Its subcellular location is the cell membrane. The catalysed reaction is a 1,2-diacyl-sn-glycero-3-phospho-L-serine + H(+) = a 1,2-diacyl-sn-glycero-3-phosphoethanolamine + CO2. It participates in phospholipid metabolism; phosphatidylethanolamine biosynthesis; phosphatidylethanolamine from CDP-diacylglycerol: step 2/2. In terms of biological role, catalyzes the formation of phosphatidylethanolamine (PtdEtn) from phosphatidylserine (PtdSer). The polypeptide is Phosphatidylserine decarboxylase proenzyme (Pectobacterium atrosepticum (strain SCRI 1043 / ATCC BAA-672) (Erwinia carotovora subsp. atroseptica)).